Here is a 166-residue protein sequence, read N- to C-terminus: Transcription antitermination protein NusB (166 aa).

Basic and acidic residues predominate over residues 1–15; the sequence is MISDDSDRFNPRDPK. Residues 1-30 are disordered; that stretch reads MISDDSDRFNPRDPKPANAGKPSKSAKRRE.

This sequence belongs to the NusB family.

Functionally, involved in transcription antitermination. Required for transcription of ribosomal RNA (rRNA) genes. Binds specifically to the boxA antiterminator sequence of the ribosomal RNA (rrn) operons. The protein is Transcription antitermination protein NusB of Pseudomonas fluorescens (strain ATCC BAA-477 / NRRL B-23932 / Pf-5).